The primary structure comprises 122 residues: Large ribosomal subunit protein uL14 (122 aa).

It belongs to the universal ribosomal protein uL14 family. In terms of assembly, part of the 50S ribosomal subunit. Forms a cluster with proteins L3 and L19. In the 70S ribosome, L14 and L19 interact and together make contacts with the 16S rRNA in bridges B5 and B8.

Its function is as follows. Binds to 23S rRNA. Forms part of two intersubunit bridges in the 70S ribosome. In Thermotoga maritima (strain ATCC 43589 / DSM 3109 / JCM 10099 / NBRC 100826 / MSB8), this protein is Large ribosomal subunit protein uL14.